Here is a 491-residue protein sequence, read N- to C-terminus: Acetyl-coenzyme A carboxylase carboxyl transferase subunit beta, chloroplastic (491 aa).

Positions Leu-224 to Lys-491 constitute a CoA carboxyltransferase N-terminal domain. Residues Cys-228, Cys-231, Cys-247, and Cys-250 each contribute to the Zn(2+) site. The C4-type zinc finger occupies Cys-228–Cys-250.

Belongs to the AccD/PCCB family. In terms of assembly, acetyl-CoA carboxylase is a heterohexamer composed of biotin carboxyl carrier protein, biotin carboxylase and 2 subunits each of ACCase subunit alpha and ACCase plastid-coded subunit beta (accD). Requires Zn(2+) as cofactor.

It localises to the plastid. It is found in the chloroplast stroma. It catalyses the reaction N(6)-carboxybiotinyl-L-lysyl-[protein] + acetyl-CoA = N(6)-biotinyl-L-lysyl-[protein] + malonyl-CoA. Its pathway is lipid metabolism; malonyl-CoA biosynthesis; malonyl-CoA from acetyl-CoA: step 1/1. Component of the acetyl coenzyme A carboxylase (ACC) complex. Biotin carboxylase (BC) catalyzes the carboxylation of biotin on its carrier protein (BCCP) and then the CO(2) group is transferred by the transcarboxylase to acetyl-CoA to form malonyl-CoA. The sequence is that of Acetyl-coenzyme A carboxylase carboxyl transferase subunit beta, chloroplastic from Vitis vinifera (Grape).